A 144-amino-acid chain; its full sequence is Transcriptional regulator SlyA (144 aa).

Residues 2–135 enclose the HTH marR-type domain; that stretch reads ESPLGSDLAR…LIKLIAKLEH (134 aa). The segment at residues 49 to 72 is a DNA-binding region (H-T-H motif); it reads QIQLAKAIGIEQPSLVRTLDQLED.

It belongs to the SlyA family. Homodimer.

The protein resides in the cytoplasm. Its function is as follows. Transcription regulator that can specifically activate or repress expression of target genes. Required for virulence and survival in the macrophage environment. Probably activates the transcription of ssrB. Independently of ssrB activation, capable of stimulating the expression of virulence genes found on pathogenicity island 2 (SPI2). Probably activates expression of ispA, xseB genes, and of omp operon. The protein is Transcriptional regulator SlyA of Salmonella typhimurium (strain LT2 / SGSC1412 / ATCC 700720).